The primary structure comprises 365 residues: tRNA/tmRNA (uracil-C(5))-methyltransferase (365 aa).

5 residues coordinate S-adenosyl-L-methionine: glutamine 189, tyrosine 217, asparagine 222, glutamate 238, and aspartate 298. The active-site Nucleophile is cysteine 323. Glutamate 357 serves as the catalytic Proton acceptor.

Belongs to the class I-like SAM-binding methyltransferase superfamily. RNA M5U methyltransferase family. TrmA subfamily.

The catalysed reaction is uridine(54) in tRNA + S-adenosyl-L-methionine = 5-methyluridine(54) in tRNA + S-adenosyl-L-homocysteine + H(+). It catalyses the reaction uridine(341) in tmRNA + S-adenosyl-L-methionine = 5-methyluridine(341) in tmRNA + S-adenosyl-L-homocysteine + H(+). Functionally, dual-specificity methyltransferase that catalyzes the formation of 5-methyluridine at position 54 (m5U54) in all tRNAs, and that of position 341 (m5U341) in tmRNA (transfer-mRNA). This Pseudoalteromonas atlantica (strain T6c / ATCC BAA-1087) protein is tRNA/tmRNA (uracil-C(5))-methyltransferase.